The primary structure comprises 87 residues: Small ribosomal subunit protein bS20 (87 aa).

The tract at residues 1-23 (MANHKSAIKRHKQSVKRAARNRA) is disordered.

This sequence belongs to the bacterial ribosomal protein bS20 family.

Its function is as follows. Binds directly to 16S ribosomal RNA. The sequence is that of Small ribosomal subunit protein bS20 from Oleidesulfovibrio alaskensis (strain ATCC BAA-1058 / DSM 17464 / G20) (Desulfovibrio alaskensis).